The chain runs to 240 residues: 4-hydroxy-tetrahydrodipicolinate reductase (240 aa).

NAD(+) is bound by residues 79–81 and 103–106; these read ATT and SANM. His-135 (proton donor/acceptor) is an active-site residue. His-136 lines the (S)-2,3,4,5-tetrahydrodipicolinate pocket. The Proton donor role is filled by Lys-139. 145–146 is a binding site for (S)-2,3,4,5-tetrahydrodipicolinate; sequence GT.

This sequence belongs to the DapB family.

The protein localises to the cytoplasm. The catalysed reaction is (S)-2,3,4,5-tetrahydrodipicolinate + NAD(+) + H2O = (2S,4S)-4-hydroxy-2,3,4,5-tetrahydrodipicolinate + NADH + H(+). It catalyses the reaction (S)-2,3,4,5-tetrahydrodipicolinate + NADP(+) + H2O = (2S,4S)-4-hydroxy-2,3,4,5-tetrahydrodipicolinate + NADPH + H(+). It functions in the pathway amino-acid biosynthesis; L-lysine biosynthesis via DAP pathway; (S)-tetrahydrodipicolinate from L-aspartate: step 4/4. Functionally, catalyzes the conversion of 4-hydroxy-tetrahydrodipicolinate (HTPA) to tetrahydrodipicolinate. In Staphylococcus aureus (strain USA300), this protein is 4-hydroxy-tetrahydrodipicolinate reductase.